A 42-amino-acid polypeptide reads, in one-letter code: MNNNLLKYLSTIPVVGAIWLTFTAGFIIEINRFFPDILSLSL.

Residues 8–28 traverse the membrane as a helical segment; that stretch reads YLSTIPVVGAIWLTFTAGFII.

The protein belongs to the PsaJ family.

It is found in the plastid. It localises to the chloroplast thylakoid membrane. In terms of biological role, may help in the organization of the PsaE and PsaF subunits. This chain is Photosystem I reaction center subunit IX, found in Gracilaria tenuistipitata var. liui (Red alga).